The primary structure comprises 657 residues: Threonine--tRNA ligase (657 aa).

Positions methionine 1–threonine 62 constitute a TGS domain. The tract at residues aspartate 240–proline 538 is catalytic. Residues cysteine 334, histidine 385, and histidine 515 each contribute to the Zn(2+) site.

It belongs to the class-II aminoacyl-tRNA synthetase family. As to quaternary structure, homodimer. Zn(2+) is required as a cofactor.

It is found in the cytoplasm. It carries out the reaction tRNA(Thr) + L-threonine + ATP = L-threonyl-tRNA(Thr) + AMP + diphosphate + H(+). In terms of biological role, catalyzes the attachment of threonine to tRNA(Thr) in a two-step reaction: L-threonine is first activated by ATP to form Thr-AMP and then transferred to the acceptor end of tRNA(Thr). Also edits incorrectly charged L-seryl-tRNA(Thr). The sequence is that of Threonine--tRNA ligase from Lacticaseibacillus paracasei (strain ATCC 334 / BCRC 17002 / CCUG 31169 / CIP 107868 / KCTC 3260 / NRRL B-441) (Lactobacillus paracasei).